The sequence spans 792 residues: Phenylalanine--tRNA ligase beta subunit (792 aa).

Residues 39–147 (ARTLEKVVVG…ADAPIGKNIQ (109 aa)) form the tRNA-binding domain. Positions 400–475 (PKIPRIILRP…HLYGYDRIPQ (76 aa)) constitute a B5 domain. Positions 453, 459, 462, and 463 each coordinate Mg(2+). The FDX-ACB domain occupies 697–791 (SKFPSIRRDI…LERKFNAKLR (95 aa)).

Belongs to the phenylalanyl-tRNA synthetase beta subunit family. Type 1 subfamily. As to quaternary structure, tetramer of two alpha and two beta subunits. Mg(2+) is required as a cofactor.

The protein localises to the cytoplasm. The catalysed reaction is tRNA(Phe) + L-phenylalanine + ATP = L-phenylalanyl-tRNA(Phe) + AMP + diphosphate + H(+). The polypeptide is Phenylalanine--tRNA ligase beta subunit (Coxiella burnetii (strain RSA 493 / Nine Mile phase I)).